Reading from the N-terminus, the 245-residue chain is Octanoyltransferase (245 aa).

The region spanning 54–242 (QNAPEQVWLL…AFEQIFGPTI (189 aa)) is the BPL/LPL catalytic domain. Substrate is bound by residues 93-100 (RGGEFTYH), 173-175 (AIG), and 186-188 (GVS). The Acyl-thioester intermediate role is filled by Cys204.

Belongs to the LipB family.

The protein resides in the cytoplasm. The enzyme catalyses octanoyl-[ACP] + L-lysyl-[protein] = N(6)-octanoyl-L-lysyl-[protein] + holo-[ACP] + H(+). It functions in the pathway protein modification; protein lipoylation via endogenous pathway; protein N(6)-(lipoyl)lysine from octanoyl-[acyl-carrier-protein]: step 1/2. Its function is as follows. Catalyzes the transfer of endogenously produced octanoic acid from octanoyl-acyl-carrier-protein onto the lipoyl domains of lipoate-dependent enzymes. Lipoyl-ACP can also act as a substrate although octanoyl-ACP is likely to be the physiological substrate. The sequence is that of Octanoyltransferase from Bartonella quintana (strain Toulouse) (Rochalimaea quintana).